We begin with the raw amino-acid sequence, 297 residues long: tRNA pseudouridine synthase B (297 aa).

The Nucleophile role is filled by Asp-39.

It belongs to the pseudouridine synthase TruB family. Type 1 subfamily.

It carries out the reaction uridine(55) in tRNA = pseudouridine(55) in tRNA. Responsible for synthesis of pseudouridine from uracil-55 in the psi GC loop of transfer RNAs. In Lactobacillus acidophilus (strain ATCC 700396 / NCK56 / N2 / NCFM), this protein is tRNA pseudouridine synthase B.